Consider the following 90-residue polypeptide: Elongation factor 1-beta (90 aa).

This sequence belongs to the EF-1-beta/EF-1-delta family.

Promotes the exchange of GDP for GTP in EF-1-alpha/GDP, thus allowing the regeneration of EF-1-alpha/GTP that could then be used to form the ternary complex EF-1-alpha/GTP/AAtRNA. This is Elongation factor 1-beta from Sulfolobus acidocaldarius (strain ATCC 33909 / DSM 639 / JCM 8929 / NBRC 15157 / NCIMB 11770).